A 241-amino-acid chain; its full sequence is Ribonuclease PH (241 aa).

Phosphate contacts are provided by residues arginine 89 and 127 to 129 (GTR).

This sequence belongs to the RNase PH family. As to quaternary structure, homohexameric ring arranged as a trimer of dimers.

The enzyme catalyses tRNA(n+1) + phosphate = tRNA(n) + a ribonucleoside 5'-diphosphate. In terms of biological role, phosphorolytic 3'-5' exoribonuclease that plays an important role in tRNA 3'-end maturation. Removes nucleotide residues following the 3'-CCA terminus of tRNAs; can also add nucleotides to the ends of RNA molecules by using nucleoside diphosphates as substrates, but this may not be physiologically important. Probably plays a role in initiation of 16S rRNA degradation (leading to ribosome degradation) during starvation. The sequence is that of Ribonuclease PH from Xanthomonas campestris pv. campestris (strain 8004).